Reading from the N-terminus, the 91-residue chain is Non-specific lipid-transfer protein 1 (91 aa).

Cystine bridges form between Cys3–Cys50, Cys13–Cys27, Cys28–Cys73, and Cys48–Cys87.

This sequence belongs to the plant LTP family.

Plant non-specific lipid-transfer proteins transfer phospholipids as well as galactolipids across membranes. May play a role in wax or cutin deposition in the cell walls of expanding epidermal cells and certain secretory tissues. The protein is Non-specific lipid-transfer protein 1 of Prunus armeniaca (Apricot).